The sequence spans 588 residues: MRTHFCGLVDETLIGQTVTLAGWTDVARNLGGVCFIDLRDHEGIVQVTVEPVAGDDASAELFKVAASLGYEDVLQVEGVVRARHAVNDKLRTGKVEVIATRISILNKAAPLPFHAHENPGEETRLKYRYLDLRRPEMQRMQRTRIKLVQALRRHLDARDFQDIETPILTKATPEGARDFLVPARMHPGEFYALPQSPQLFKQILMVAGFDRYYQIARCFRDEALRADRQLEFTQLDMEFAFVRERDVQDFVEDMMRAIFKEVVDVDLAAQFPRMTWAEAMRRYGSDKPDLRIALELVDVAELVKSSEFPVFTAAANDADGRVAALRIPGGATLSRKQIDDYAAHAAKYGAKGLAYIKLSETGEVSSPIAKFFSEEAFAALLKHVGAGNGDIVFFGAGGYTKVSDFMGALRLKAGKEFDLVAEGWAPLWVTDFPMFEWDEEAQRYVALHHPFTAPAVDDIADLRANARTAVSRGYDMVLNGNEIGGGSIRIHRPDMQSAVFELLGIGAEEARAKFGFLLDALNYGAPPHGGIAFGIDRIAALMAGTESIRDVIPFPKTTGAQDLMTDAPSPIAADQLAEVHVQVRSKQV.

Glu174 contributes to the L-aspartate binding site. The interval 198 to 201 is aspartate; it reads QLFK. Position 220 (Arg220) interacts with L-aspartate. ATP contacts are provided by residues 220 to 222 and Gln229; that span reads RDE. His448 is a binding site for L-aspartate. Glu482 contributes to the ATP binding site. Arg489 lines the L-aspartate pocket. 534–537 is an ATP binding site; sequence GIDR.

It belongs to the class-II aminoacyl-tRNA synthetase family. Type 1 subfamily. In terms of assembly, homodimer.

The protein resides in the cytoplasm. The catalysed reaction is tRNA(Asp) + L-aspartate + ATP = L-aspartyl-tRNA(Asp) + AMP + diphosphate. Catalyzes the attachment of L-aspartate to tRNA(Asp) in a two-step reaction: L-aspartate is first activated by ATP to form Asp-AMP and then transferred to the acceptor end of tRNA(Asp). This is Aspartate--tRNA ligase from Xanthomonas oryzae pv. oryzae (strain MAFF 311018).